A 597-amino-acid chain; its full sequence is Scarecrow-like protein 5 (597 aa).

The interval E111–N172 is disordered. Low complexity predominate over residues N123–S169. One can recognise a GRAS domain in the interval S218 to R597. The interval G225–S285 is leucine repeat I (LRI). A VHIID region spans residues M304–G369. Residues V335 to D339 carry the VHIID motif. The leucine repeat II (LRII) stretch occupies residues L385–K417. Residues L426–N520 form a PFYRE region. Residues A523–R597 are SAW.

Belongs to the GRAS family. In terms of tissue distribution, expressed in seedlings, roots, shoots, leaves, flowers and siliques.

The protein resides in the nucleus. Functionally, probable transcription factor involved in plant development. In Arabidopsis thaliana (Mouse-ear cress), this protein is Scarecrow-like protein 5 (SCL5).